Reading from the N-terminus, the 348-residue chain is Protein DMR6-LIKE OXYGENASE 2 (348 aa).

The Fe2OG dioxygenase domain maps to 194–294; sequence KHGQHMAINY…RISIPTFYCP (101 aa). His219, Asp221, and His275 together coordinate Fe cation. Arg285 contacts 2-oxoglutarate.

Belongs to the iron/ascorbate-dependent oxidoreductase family. The cofactor is Fe(2+).

It carries out the reaction salicylate + NADH + O2 + H(+) = 2,3-dihydroxybenzoate + NAD(+) + H2O. In terms of biological role, converts salicylic acid (SA) to 2,3-dihydroxybenzoic acid (2,3-DHBA). Negative regulator of defense against Hyaloperonospora arabidopsidis. Its function is as follows. (Microbial infection) Confers susceptibility to the downy mildew pathogen Hyaloperonospora arabidopsidis. This chain is Protein DMR6-LIKE OXYGENASE 2, found in Arabidopsis thaliana (Mouse-ear cress).